Reading from the N-terminus, the 100-residue chain is NADH-quinone oxidoreductase subunit K (100 aa).

3 consecutive transmembrane segments (helical) span residues 4-24 (LQHG…CLVL), 28-48 (LLFM…AFVV), and 60-80 (IMYI…LALL).

The protein belongs to the complex I subunit 4L family. NDH-1 is composed of 13 different subunits. Subunits NuoA, H, J, K, L, M, N constitute the membrane sector of the complex.

The protein resides in the cell inner membrane. It catalyses the reaction a quinone + NADH + 5 H(+)(in) = a quinol + NAD(+) + 4 H(+)(out). Functionally, NDH-1 shuttles electrons from NADH, via FMN and iron-sulfur (Fe-S) centers, to quinones in the respiratory chain. The immediate electron acceptor for the enzyme in this species is believed to be ubiquinone. Couples the redox reaction to proton translocation (for every two electrons transferred, four hydrogen ions are translocated across the cytoplasmic membrane), and thus conserves the redox energy in a proton gradient. The protein is NADH-quinone oxidoreductase subunit K of Proteus mirabilis (strain HI4320).